Consider the following 476-residue polypeptide: Protein transport protein Sec61 subunit alpha (476 aa).

Residues 2–33 lie on the Cytoplasmic side of the membrane; that stretch reads GIKFLEFIKPFCAVLPEIQKPERKIQFREKVL. A helical transmembrane segment spans residues 34-53; that stretch reads WTAITLFIFLVCCQIPLFGI. The Lumenal portion of the chain corresponds to 54-76; it reads MSSDSADPFYWMRVILASNRGTL. A helical transmembrane segment spans residues 77 to 96; the sequence is MELGIAPIVTSGLIMQLLAG. Residues 97-117 are Cytoplasmic-facing; that stretch reads AKIIEVGDTPKDRALFNGAQK. A helical membrane pass occupies residues 118–138; it reads LFGMIITIGQAIVYVMTGMYG. The Lumenal portion of the chain corresponds to 139 to 144; that stretch reads DPSEMG. Residues 145–165 traverse the membrane as a helical segment; it reads AGICLLIIIQLFVAGLIVLLL. Over 166–172 the chain is Cytoplasmic; the sequence is DELLQKG. A helical membrane pass occupies residues 173–193; the sequence is YGLGSGISLFIATNICETIVW. Residues 194–240 lie on the Lumenal side of the membrane; the sequence is KAFGPTTVNTGRGTEFEGAIIALFHLLATRTDKVRALREAFYRQNLP. A helical transmembrane segment spans residues 241 to 261; the sequence is NLMNLIATVFVFAVVIYFQGF. The Cytoplasmic portion of the chain corresponds to 262 to 288; sequence RVDLPIKSARYRGQYNTYPIKLFYTSN. The helical transmembrane segment at 289-309 threads the bilayer; that stretch reads IPIILQSALVSNLYVISQMLS. The Lumenal portion of the chain corresponds to 310–354; it reads TRFSGNFLVNLLGTWSDATTSGPARAYPVAGLCYYLSPPESFGSV. The helical transmembrane segment at 355–375 threads the bilayer; sequence LDDPVHAVIYIVFMLGSCAFF. Topologically, residues 376-420 are cytoplasmic; the sequence is SKTWIEVSGSSAKDVAKQLKEQQMVMRGHRETSMVHELNRYIPTA. The chain crosses the membrane as a helical span at residues 421 to 441; that stretch reads AAFGGLCIGGLSVMADFLGAI. The Lumenal portion of the chain corresponds to 442 to 445; that stretch reads GSGT. A helical membrane pass occupies residues 446–462; the sequence is GILLAVTIIYQYFEIFV. Residues 463-476 are Cytoplasmic-facing; the sequence is KEQSEVGSMGALLF.

This sequence belongs to the SecY/SEC61-alpha family. As to quaternary structure, the SEC61 channel-forming translocon complex consists of channel-forming core components SEC61A1, SEC61B and SEC61G and different auxiliary components such as SEC62 and SEC63. The SEC61 channel associates with the multi-pass translocon (MPT) complex.

The protein resides in the endoplasmic reticulum membrane. Functionally, component of SEC61 channel-forming translocon complex that mediates transport of signal peptide-containing precursor polypeptides across the endoplasmic reticulum (ER). Forms a ribosome receptor and a gated pore in the ER membrane, both functions required for cotranslational translocation of nascent polypeptides. May cooperate with auxiliary protein SEC62, SEC63 and HSPA5/BiP to enable post-translational transport of small presecretory proteins. The SEC61 channel is also involved in ER membrane insertion of transmembrane proteins: it mediates membrane insertion of the first few transmembrane segments of proteins, while insertion of subsequent transmembrane regions of multi-pass membrane proteins is mediated by the multi-pass translocon (MPT) complex. The polypeptide is Protein transport protein Sec61 subunit alpha (sec61a) (Bovichtus variegatus (Thornfish)).